Here is a 264-residue protein sequence, read N- to C-terminus: Ribosomal protein L11 methyltransferase (264 aa).

4 residues coordinate S-adenosyl-L-methionine: Thr116, Gly137, Asp159, and Asn200.

Belongs to the methyltransferase superfamily. PrmA family.

It is found in the cytoplasm. The catalysed reaction is L-lysyl-[protein] + 3 S-adenosyl-L-methionine = N(6),N(6),N(6)-trimethyl-L-lysyl-[protein] + 3 S-adenosyl-L-homocysteine + 3 H(+). Methylates ribosomal protein L11. The sequence is that of Ribosomal protein L11 methyltransferase from Thermotoga neapolitana.